A 161-amino-acid polypeptide reads, in one-letter code: Probable ubiquitin-conjugating enzyme E2 16 (161 aa).

In terms of domain architecture, UBC core spans I15 to V161. The Glycyl thioester intermediate role is filled by C99.

It belongs to the ubiquitin-conjugating enzyme family.

The enzyme catalyses S-ubiquitinyl-[E1 ubiquitin-activating enzyme]-L-cysteine + [E2 ubiquitin-conjugating enzyme]-L-cysteine = [E1 ubiquitin-activating enzyme]-L-cysteine + S-ubiquitinyl-[E2 ubiquitin-conjugating enzyme]-L-cysteine.. The protein operates within protein modification; protein ubiquitination. Functionally, accepts the ubiquitin from the E1 complex and catalyzes its covalent attachment to other proteins. This Arabidopsis thaliana (Mouse-ear cress) protein is Probable ubiquitin-conjugating enzyme E2 16 (UBC16).